A 430-amino-acid chain; its full sequence is Dynactin subunit 2 (430 aa).

Disordered regions lie at residues 1 to 51 and 201 to 228; these read MSEG…IDRS and SLSS…SSSS. Positions 32–44 are enriched in polar residues; the sequence is SISNLADESSELV. 2 coiled-coil regions span residues 241 to 319 and 397 to 430; these read TGEQ…QDET and DDSF…QQQQ.

The protein belongs to the dynactin subunit 2 family. In terms of assembly, subunit of dynactin, a multiprotein complex associated with dynein.

The protein resides in the cytoplasm. Its subcellular location is the cytoskeleton. It localises to the membrane. Functionally, modulates cytoplasmic dynein binding to an organelle, and plays a role in prometaphase chromosome alignment and spindle organization during mitosis. This Dictyostelium discoideum (Social amoeba) protein is Dynactin subunit 2 (dynB).